A 113-amino-acid chain; its full sequence is Integration host factor subunit alpha (113 aa).

Disordered regions lie at residues 59–80 and 94–113; these read GNFQ…GETI and QKLK…ASAE. Over residues 104 to 113 the composition is skewed to pro residues; the sequence is NSPPDPASAE.

It belongs to the bacterial histone-like protein family. As to quaternary structure, heterodimer of an alpha and a beta chain.

Functionally, this protein is one of the two subunits of integration host factor, a specific DNA-binding protein that functions in genetic recombination as well as in transcriptional and translational control. The polypeptide is Integration host factor subunit alpha (Bordetella pertussis (strain Tohama I / ATCC BAA-589 / NCTC 13251)).